Here is a 298-residue protein sequence, read N- to C-terminus: MDNNIIIGAMTALITPFKNGKLDEQTYHKLIKRQIANGIDAVVPVGTTGESATLTHEEHRICIEIALDACKGSSCKVLAGAGSNATHEAVSLAKFAQEHGADGILSVTPYYNKPTQEGLYLHYKEIAKSIDIPVLLYNVPGRTGCDLQTETIIRLFRDCENIYGVKEASGSIDKCVDLLAHEPRMMLLSGEDAINYPILSNGGKGVISVTSNLLPDMISKLTHFALEEKYIEAKKINDELYNINKILFCESNPIPIKAAMYIAGLTPTLEYRLPLCKPSDCNLAKIEAIMKNYDIKGF.

Thr-48 contributes to the pyruvate binding site. The active-site Proton donor/acceptor is Tyr-137. Residue Lys-166 is the Schiff-base intermediate with substrate of the active site. Ile-207 contacts pyruvate.

The protein belongs to the DapA family. As to quaternary structure, homotetramer; dimer of dimers.

The protein resides in the cytoplasm. It carries out the reaction L-aspartate 4-semialdehyde + pyruvate = (2S,4S)-4-hydroxy-2,3,4,5-tetrahydrodipicolinate + H2O + H(+). It participates in amino-acid biosynthesis; L-lysine biosynthesis via DAP pathway; (S)-tetrahydrodipicolinate from L-aspartate: step 3/4. Its function is as follows. Catalyzes the condensation of (S)-aspartate-beta-semialdehyde [(S)-ASA] and pyruvate to 4-hydroxy-tetrahydrodipicolinate (HTPA). In Campylobacter lari (strain RM2100 / D67 / ATCC BAA-1060), this protein is 4-hydroxy-tetrahydrodipicolinate synthase.